The primary structure comprises 376 residues: N-acetyldiaminopimelate deacetylase (376 aa).

Asp69 is a catalytic residue. The active-site Proton acceptor is the Glu128.

It belongs to the peptidase M20A family. N-acetyldiaminopimelate deacetylase subfamily.

It catalyses the reaction N-acetyl-(2S,6S)-2,6-diaminopimelate + H2O = (2S,6S)-2,6-diaminopimelate + acetate. Its pathway is amino-acid biosynthesis; L-lysine biosynthesis via DAP pathway; LL-2,6-diaminopimelate from (S)-tetrahydrodipicolinate (acetylase route): step 3/3. In terms of biological role, catalyzes the conversion of N-acetyl-diaminopimelate to diaminopimelate and acetate. This Streptococcus pneumoniae (strain Taiwan19F-14) protein is N-acetyldiaminopimelate deacetylase.